We begin with the raw amino-acid sequence, 184 residues long: MSTNVAKARVKSVLNESRQIERAAVLIRMGARMQVLESETTLSYERLIRLYKEIAGKSPSKGQLPFSTDWFLTWQENIHSSLFLNIYEYLSKGLDLDAVELLIRAYRLYDEQVTTTAIAPLLSFTRAWRLVKFVDAGMLTRTRCARCGGQFVTELYESRHFICGLCHPPARAGKSRVAGALMLH.

Positions 144, 147, 163, and 166 each coordinate Zn(2+).

It belongs to the FlhC family. As to quaternary structure, heterohexamer composed of two FlhC and four FlhD subunits. Each FlhC binds a FlhD dimer, forming a heterotrimer, and a hexamer assembles by dimerization of two heterotrimers. It depends on Zn(2+) as a cofactor.

It localises to the cytoplasm. Its function is as follows. Functions in complex with FlhD as a master transcriptional regulator that regulates transcription of several flagellar and non-flagellar operons by binding to their promoter region. Activates expression of class 2 flagellar genes, including fliA, which is a flagellum-specific sigma factor that turns on the class 3 genes. Also regulates genes whose products function in a variety of physiological pathways. The polypeptide is Flagellar transcriptional regulator FlhC (Verminephrobacter eiseniae (strain EF01-2)).